Consider the following 491-residue polypeptide: Glutamyl-tRNA(Gln) amidotransferase subunit A (491 aa).

Residues K81 and S156 each act as charge relay system in the active site. S180 (acyl-ester intermediate) is an active-site residue.

It belongs to the amidase family. GatA subfamily. In terms of assembly, heterotrimer of A, B and C subunits.

The catalysed reaction is L-glutamyl-tRNA(Gln) + L-glutamine + ATP + H2O = L-glutaminyl-tRNA(Gln) + L-glutamate + ADP + phosphate + H(+). Functionally, allows the formation of correctly charged Gln-tRNA(Gln) through the transamidation of misacylated Glu-tRNA(Gln) in organisms which lack glutaminyl-tRNA synthetase. The reaction takes place in the presence of glutamine and ATP through an activated gamma-phospho-Glu-tRNA(Gln). The polypeptide is Glutamyl-tRNA(Gln) amidotransferase subunit A (Alcanivorax borkumensis (strain ATCC 700651 / DSM 11573 / NCIMB 13689 / SK2)).